The chain runs to 142 residues: ATP synthase epsilon chain (142 aa).

It belongs to the ATPase epsilon chain family. As to quaternary structure, F-type ATPases have 2 components, CF(1) - the catalytic core - and CF(0) - the membrane proton channel. CF(1) has five subunits: alpha(3), beta(3), gamma(1), delta(1), epsilon(1). CF(0) has three main subunits: a, b and c.

The protein localises to the cell inner membrane. Functionally, produces ATP from ADP in the presence of a proton gradient across the membrane. In Haemophilus influenzae (strain 86-028NP), this protein is ATP synthase epsilon chain.